A 160-amino-acid chain; its full sequence is tRNA (cytidine(34)-2'-O)-methyltransferase (160 aa).

The S-adenosyl-L-methionine site is built by leucine 78, glycine 100, isoleucine 122, and serine 130.

The protein belongs to the class IV-like SAM-binding methyltransferase superfamily. RNA methyltransferase TrmH family. TrmL subfamily. In terms of assembly, homodimer.

The protein resides in the cytoplasm. The catalysed reaction is cytidine(34) in tRNA + S-adenosyl-L-methionine = 2'-O-methylcytidine(34) in tRNA + S-adenosyl-L-homocysteine + H(+). The enzyme catalyses 5-carboxymethylaminomethyluridine(34) in tRNA(Leu) + S-adenosyl-L-methionine = 5-carboxymethylaminomethyl-2'-O-methyluridine(34) in tRNA(Leu) + S-adenosyl-L-homocysteine + H(+). In terms of biological role, methylates the ribose at the nucleotide 34 wobble position in the two leucyl isoacceptors tRNA(Leu)(CmAA) and tRNA(Leu)(cmnm5UmAA). Catalyzes the methyl transfer from S-adenosyl-L-methionine to the 2'-OH of the wobble nucleotide. In Haemophilus influenzae (strain ATCC 51907 / DSM 11121 / KW20 / Rd), this protein is tRNA (cytidine(34)-2'-O)-methyltransferase.